The following is a 332-amino-acid chain: DNA-directed RNA polymerase subunit alpha (332 aa).

The interval 1-244 (MKKHAKVYYS…AHLNLLADVE (244 aa)) is alpha N-terminal domain (alpha-NTD). Residues 259–332 (IKEEPIRRFS…NYKNENKGEN (74 aa)) form an alpha C-terminal domain (alpha-CTD) region.

Belongs to the RNA polymerase alpha chain family. Homodimer. The RNAP catalytic core consists of 2 alpha, 1 beta, 1 beta' and 1 omega subunit. When a sigma factor is associated with the core the holoenzyme is formed, which can initiate transcription.

It carries out the reaction RNA(n) + a ribonucleoside 5'-triphosphate = RNA(n+1) + diphosphate. Functionally, DNA-dependent RNA polymerase catalyzes the transcription of DNA into RNA using the four ribonucleoside triphosphates as substrates. The chain is DNA-directed RNA polymerase subunit alpha from Mesomycoplasma hyopneumoniae (strain 7448) (Mycoplasma hyopneumoniae).